Consider the following 476-residue polypeptide: Growth/differentiation factor 10 (476 aa).

Positions 1-29 (MAPGLARISLRSQLLPLVPLLLLLRGAGC) are cleaved as a signal peptide. A propeptide spanning residues 30–366 (GHRVPSWSSL…EKTMQKARRR (337 aa)) is cleaved from the precursor. Residues N114, N152, and N277 are each glycosylated (N-linked (GlcNAc...) asparagine). Disordered stretches follow at residues 268–305 (GDFEPGAAPNSSADPRVRRAAQVSKPLQDNELPGLDER) and 330–358 (PRTGRKDRKKKDQDTFTPSSSQVLDFDEK). 3 disulfides stabilise this stretch: C374–C441, C403–C473, and C407–C475. A glycan (N-linked (GlcNAc...) asparagine) is linked at N467.

Belongs to the TGF-beta family. Homodimer or heterodimer. Can form a non-covalent complex of the mature region and the pro-region. Costa, costicartilage, femur, calvaria, trachea, aorta and brain. Predominantly in the cerebellum.

Its subcellular location is the secreted. In terms of biological role, growth factor involved in osteogenesis and adipogenesis. Plays an inhibitory role in the process of osteoblast differentiation via SMAD2/3 pathway. Plays an inhibitory role in the process of adipogenesis. The protein is Growth/differentiation factor 10 of Rattus norvegicus (Rat).